A 318-amino-acid polypeptide reads, in one-letter code: Protein FAM228A (318 aa).

Residues 259–297 form a disordered region; it reads SQESKRHEKKGLALGTGQHRPRSWAAGEGQQRRRSQPVD.

Belongs to the FAM228 family.

This is Protein FAM228A (FAM228A) from Bos taurus (Bovine).